Here is a 1826-residue protein sequence, read N- to C-terminus: ATPase family AAA domain-containing protein 5 (1826 aa).

S44 bears the Phosphoserine mark. K127 participates in a covalent cross-link: Glycyl lysine isopeptide (Lys-Gly) (interchain with G-Cter in SUMO2). Disordered regions lie at residues 170-254 (SIED…KRAD), 282-311 (PAVPACVPSGPGEAVKSGSEGELSGSCEPS), 323-367 (AQVH…RKSN), 398-572 (QQFM…EPGS), 588-623 (RSCSTPATNALGGTESEDAQDTIPVKASTPKSARTS), 647-684 (KFTRISTPKKSKKSSKKSETTEEELTSQKKKANSTSKN), and 709-729 (VVPLRRSSRHQARSAKEKSPE). S215 carries the phosphoserine modification. Residues 243–254 (NDSRTHATKRAD) are compositionally biased toward basic and acidic residues. Residues 298 to 311 (SGSEGELSGSCEPS) show a composition bias toward low complexity. Phosphoserine is present on residues S351 and S366. The tract at residues 365-381 (KSNVVIQEGQLELAVLE) is interaction with WDR48. The segment covering 418-442 (KPLEKQKDPSEKSVHEGDSSSEKII) has biased composition (basic and acidic residues). A compositionally biased stretch (polar residues) spans 445–456 (PNIQRVSSQGCL). The segment covering 459–468 (HADRGSFPKE) has biased composition (basic and acidic residues). Residues 469–481 (KSKKPNKKGKKTR) show a composition bias toward basic residues. A compositionally biased stretch (basic and acidic residues) spans 487–505 (NREENIQKEKTAFSLKDEQ). Positions 540–559 (DSVQMSLCNRNKSRSSSTPT) are enriched in polar residues. S591 and S603 each carry phosphoserine. S727 and S801 each carry phosphoserine. The segment at 965-1034 (GKQASPQLQP…NLDPSRDSGT (70 aa)) is disordered. Residues 1006–1019 (EEMKGRSKDLDERI) show a composition bias toward basic and acidic residues. S1104 bears the Phosphoserine mark. An ATP-binding site is contributed by 1119-1126 (GPTGVGKT). Positions 1183–1216 (YNIGKSPKKLNSPGKVVTSPRKLPPSSPKTSGQK) are disordered. Positions 1415–1419 (LVCSE) match the LXCXE motif motif. Disordered regions lie at residues 1527-1552 (PASMGHLTRKQSKDQPLRKSQKRKQK) and 1592-1611 (SNPEIKTQNSGFKPHSVPQP). The interaction with RAD51 and RFC5 stretch occupies residues 1612–1701 (PKTLAEKKCC…ATAEALSFTE (90 aa)).

Belongs to the AAA ATPase family. In terms of assembly, component of a heteropentameric replication factor ATAD5 RFC-like complex composed of one large subunit (ATAD5) and four small subunits (RFC2, RFC3, RFC4 and RFC5). Within the ATAD5 RFC-like complex, interacts with RFC2, RFC4 and RFC5. Within the ATAD5 RFC-like complex, interacts directly via-N terminal with RAD51; the interactions is enhanced under replication stress. Interacts with RB1 predominantly in G1 phase via its LXCXE motif. Interacts with RAD9A in growing cells. The interaction with RAD9A is reduced after exposure to DNA replication-inhibiting agents. Interacts with BRD4. Interacts with PCNA. Interacts with deubiquitinating enzyme USP1, and its associated factor, WDR48. Post-translationally, ATR may stimulate the RAD9A dissociation. Expressed ubiquitously in all cell lines like teratocarcinoma, cell lymphoma, lymphoma.

The protein resides in the nucleus. Functionally, has an important role in DNA replication and in maintaining genome integrity during replication stress. Involved in a RAD9A-related damage checkpoint, a pathway that is important in determining whether DNA damage is compatible with cell survival or whether it requires cell elimination by apoptosis. Modulates the RAD9A interaction with BCL2 and thereby induces DNA damage-induced apoptosis. Promotes PCNA deubiquitination by recruiting the ubiquitin-specific protease 1 (USP1) and WDR48 thereby down-regulating the error-prone damage bypass pathway. As component of the ATAD5 RFC-like complex, regulates the function of the DNA polymerase processivity factor PCNA by unloading the ring-shaped PCNA homotrimer from DNA after replication during the S phase of the cell cycle. This seems to be dependent on its ATPase activity. Plays important roles in restarting stalled replication forks under replication stress, by unloading the PCNA homotrimer from DNA and recruiting RAD51 possibly through an ATR-dependent manner. Ultimately this enables replication fork regression, breakage, and eventual fork restart. Both the PCNA unloading activity and the interaction with WDR48 are required to efficiently recruit RAD51 to stalled replication forks. Promotes the generation of MUS81-mediated single-stranded DNA-associated breaks in response to replication stress, which is an alternative pathway to restart stalled/regressed replication forks. This is ATPase family AAA domain-containing protein 5 (Atad5) from Mus musculus (Mouse).